Consider the following 676-residue polypeptide: Pre-mRNA-splicing factor CLF1 (676 aa).

HAT repeat units follow at residues 46–78 (EYQG…WELE), 80–112 (REFA…CELK), 114–146 (KNIN…TEET), 148–179 (GNIA…MEKR), 181–212 (REFD…FEME), 215–255 (NRDT…FETR), 257–291 (REYE…FEKQ), 301–333 (VVLT…LGQE), 336–369 (LEAD…LWIK), 379–415 (KEVE…FEIR), 417–449 (GNLP…LEAK), 451–483 (REFD…LEQM), 485–519 (GDEE…FEAE), 521–553 (ENYD…FEVT), 576–614 (EAKA…FEEE), and 620–652 (SKAD…YVFP). The segment covering 616–628 (GDDKSKADLDKRK) has biased composition (basic and acidic residues). Residues 616-636 (GDDKSKADLDKRKPTPVKKKR) are disordered.

It belongs to the crooked-neck family. Associated with the spliceosome.

The protein localises to the nucleus. In terms of biological role, involved in pre-mRNA splicing and cell cycle progression. Required for the spliceosome assembly and initiation of the DNA replication. The polypeptide is Pre-mRNA-splicing factor CLF1 (CLF1) (Yarrowia lipolytica (strain CLIB 122 / E 150) (Yeast)).